The chain runs to 144 residues: Short-chain diamines transporter (144 aa).

A run of 4 helical transmembrane segments spans residues 9–29 (IHAI…LSFI), 35–55 (EVTG…NMIF), 76–96 (ILHA…MIAY), and 103–123 (IDAF…TFIF).

This sequence belongs to the proteobacterial antimicrobial compound efflux (PACE) (TC 2.A.117) family. Exists in a monomer-homodimer equilibrium. The dimer is probably the functional form of the protein, and the assembly of the dimer is mediated by binding of chlorhexidine and promoted by high pH conditions.

Its subcellular location is the cell inner membrane. Protonation/deprotonation of Glu-15 may play an important role in transporter function. Cadaverin transport is inhibited in the presence of CCCP. Mediates the efflux of short-chain diamines when energized by an electrochemical gradient. Recognizes specifically the short-chain diamines cadaverine and putrescine as substrates, and promotes the active transport of these substrates in exchange for a cation. Protons are probably the primary source of energy for transport, however it was not possible to conclude with complete certainty that protons, rather than alternative cations such as Na(+) ions, are exchanged for substrates by AceI. In addition, is involved in resistance to the synthetic biocide chlorhexidine, a widely used antiseptic and disinfectant in both hospital and community settings. Interacts directly with chlorhexidine and mediates its efflux via an energy-dependent mechanism. In Acinetobacter baumannii (strain ATCC 17978 / DSM 105126 / CIP 53.77 / LMG 1025 / NCDC KC755 / 5377), this protein is Short-chain diamines transporter.